We begin with the raw amino-acid sequence, 481 residues long: 3-isopropylmalate dehydratase large subunit (481 aa).

Residues C357, C417, and C420 each contribute to the [4Fe-4S] cluster site. The segment covering S429–N441 has biased composition (polar residues). The interval S429 to R451 is disordered.

The protein belongs to the aconitase/IPM isomerase family. LeuC type 1 subfamily. As to quaternary structure, heterodimer of LeuC and LeuD. [4Fe-4S] cluster serves as cofactor.

The enzyme catalyses (2R,3S)-3-isopropylmalate = (2S)-2-isopropylmalate. Its pathway is amino-acid biosynthesis; L-leucine biosynthesis; L-leucine from 3-methyl-2-oxobutanoate: step 2/4. In terms of biological role, catalyzes the isomerization between 2-isopropylmalate and 3-isopropylmalate, via the formation of 2-isopropylmaleate. This is 3-isopropylmalate dehydratase large subunit from Mycobacterium sp. (strain JLS).